The following is a 434-amino-acid chain: Indole diterpene prenyltransferase nodD2 (434 aa).

L-tryptophan is bound by residues Leu-85–Ile-86 and Glu-94. Residues Arg-107, Lys-194, Arg-268, Lys-270, Tyr-272, Gln-351, Tyr-353, Tyr-418, and Tyr-422 each coordinate substrate.

Belongs to the tryptophan dimethylallyltransferase family.

The protein operates within secondary metabolite biosynthesis. Its function is as follows. Indole diterpene prenyltransferase; part of the gene cluster that mediates the biosynthesis of the indole diterpenes nodulisporic acids (NA). Nodulisporic acid A (NAA) and its chemically modified derivatives are of particular significance because of their highly potent insecticidal activity against blood-feeding arthropods and lack of observable adverse effects on mammals, in particular the tremogenicity associated with the paspaline-derived IDTs is not observed. The geranylgeranyl diphosphate (GGPP) synthase ggs1, localized outside of the cluster, is proposed to catalyze the first step in nodulisporic acid biosynthesis via conversion of farnesyl pyrophosphate and isopentyl pyrophosphate into geranylgeranyl pyrophosphate (GGPP). Condensation of indole-3-glycerol phosphate with GGPP by the prenyl transferase nodC then forms 3-geranylgeranylindole (3-GGI). Epoxidation by the FAD-dependent monooxygenase nodM leads to a single-epoxidized-GGI that is substrate of the terpene cyclase nodB for cyclization to yield emindole SB. The terminal methyl carbon, C28, of emindole SB is then oxidized by the cytochrome P450 monooxygenase nodW to produce nodulisporic acid F (NAF), the pentacyclic core of NAA. NAF is converted to nodulisporic acid E (NAE) via prenylation. This step is probably performed by one of the indole diterpene prenyltransferases nodD1 or nodD2. Several oxidation steps performed by the FAD-linked oxidoreductase nodO and one of the cytochrome P450 monooxygenase nodR, nodX or nodZ further convert NAE to nodulisporic acid D (NAD). NAD is substrate of cytochrome P450 monooxygenase nodJ to produce the precursor of nodulisporic acid C (NAC), converted to NAC by one of the indole diterpene prenyltransferases nodD1 or nodD2. The FAD-dependent monooxygenase nodY2 then oxidizes NAC to nodulisporic acid B (NAB). Finally NAB is converted to NAA by one of the cytochrome P450 monooxygenases nodR, nodX or nodZ. This is Indole diterpene prenyltransferase nodD2 from Hypoxylon pulicicidum.